Reading from the N-terminus, the 183-residue chain is ATP synthase subunit delta (183 aa).

Belongs to the ATPase delta chain family. F-type ATPases have 2 components, F(1) - the catalytic core - and F(0) - the membrane proton channel. F(1) has five subunits: alpha(3), beta(3), gamma(1), delta(1), epsilon(1). CF(0) has four main subunits: a(1), b(1), b'(1) and c(10-14). The alpha and beta chains form an alternating ring which encloses part of the gamma chain. F(1) is attached to F(0) by a central stalk formed by the gamma and epsilon chains, while a peripheral stalk is formed by the delta, b and b' chains.

It localises to the cellular thylakoid membrane. F(1)F(0) ATP synthase produces ATP from ADP in the presence of a proton or sodium gradient. F-type ATPases consist of two structural domains, F(1) containing the extramembraneous catalytic core and F(0) containing the membrane proton channel, linked together by a central stalk and a peripheral stalk. During catalysis, ATP synthesis in the catalytic domain of F(1) is coupled via a rotary mechanism of the central stalk subunits to proton translocation. In terms of biological role, this protein is part of the stalk that links CF(0) to CF(1). It either transmits conformational changes from CF(0) to CF(1) or is implicated in proton conduction. This chain is ATP synthase subunit delta, found in Nostoc sp. (strain PCC 7120 / SAG 25.82 / UTEX 2576).